Reading from the N-terminus, the 356-residue chain is UDP-N-acetylglucosamine--N-acetylmuramyl-(pentapeptide) pyrophosphoryl-undecaprenol N-acetylglucosamine transferase (356 aa).

Residues 15 to 17, N127, R163, S191, I244, 263 to 268, and Q288 contribute to the UDP-N-acetyl-alpha-D-glucosamine site; these read TGG and ALTVSE.

This sequence belongs to the glycosyltransferase 28 family. MurG subfamily.

The protein localises to the cell inner membrane. The enzyme catalyses di-trans,octa-cis-undecaprenyl diphospho-N-acetyl-alpha-D-muramoyl-L-alanyl-D-glutamyl-meso-2,6-diaminopimeloyl-D-alanyl-D-alanine + UDP-N-acetyl-alpha-D-glucosamine = di-trans,octa-cis-undecaprenyl diphospho-[N-acetyl-alpha-D-glucosaminyl-(1-&gt;4)]-N-acetyl-alpha-D-muramoyl-L-alanyl-D-glutamyl-meso-2,6-diaminopimeloyl-D-alanyl-D-alanine + UDP + H(+). The protein operates within cell wall biogenesis; peptidoglycan biosynthesis. Its function is as follows. Cell wall formation. Catalyzes the transfer of a GlcNAc subunit on undecaprenyl-pyrophosphoryl-MurNAc-pentapeptide (lipid intermediate I) to form undecaprenyl-pyrophosphoryl-MurNAc-(pentapeptide)GlcNAc (lipid intermediate II). The polypeptide is UDP-N-acetylglucosamine--N-acetylmuramyl-(pentapeptide) pyrophosphoryl-undecaprenol N-acetylglucosamine transferase (Klebsiella pneumoniae subsp. pneumoniae (strain ATCC 700721 / MGH 78578)).